Consider the following 1368-residue polypeptide: DNA-directed RNA polymerase subunit beta (1368 aa).

Belongs to the RNA polymerase beta chain family. As to quaternary structure, the RNAP catalytic core consists of 2 alpha, 1 beta, 1 beta' and 1 omega subunit. When a sigma factor is associated with the core the holoenzyme is formed, which can initiate transcription.

It carries out the reaction RNA(n) + a ribonucleoside 5'-triphosphate = RNA(n+1) + diphosphate. In terms of biological role, DNA-dependent RNA polymerase catalyzes the transcription of DNA into RNA using the four ribonucleoside triphosphates as substrates. In Herminiimonas arsenicoxydans, this protein is DNA-directed RNA polymerase subunit beta.